Reading from the N-terminus, the 4363-residue chain is AM-toxin synthetase AMT1 (4363 aa).

The segment at 278–670 (AGQAKQRPHA…GSLLYVGRKD (393 aa)) is adenylation 1. Residues 810 to 887 (APDSVIARQL…ALAAIAKVIP (78 aa)) enclose the Carrier 1 domain. Residue Ser-847 is modified to O-(pantetheine 4'-phosphoryl)serine. Residues 926-1340 (EDVYACTPLQ…TLGQIDVLTS (415 aa)) are condensation 1. Positions 1368-1765 (KQARTRPGAI…LGRKDTQIKI (398 aa)) are adenylation 2. Residues 1884-1961 (PPVTDMEKHV…DQARHVTLLT (78 aa)) enclose the Carrier 2 domain. Ser-1922 is modified (O-(pantetheine 4'-phosphoryl)serine). The segment at 1999–2410 (EDVYPCTPLQ…ASPSSSTLVS (412 aa)) is condensation 2. Residues 2448–2853 (RKKALAAPQA…GRKDNQVKIR (406 aa)) are adenylation 3. In terms of domain architecture, Carrier 3 spans 2977–3053 (LPSTVMEETL…DLAACCTDRR (77 aa)). The residue at position 3014 (Ser-3014) is an O-(pantetheine 4'-phosphoryl)serine. The segment at 3098–3503 (VEDVYPCTPM…ELVSSIETLN (406 aa)) is condensation 3. The 77-residue stretch at 3730–3806 (PAVTAMQLAI…SLAVRATENT (77 aa)) folds into the Carrier 4 domain. Ser-3767 bears the O-(pantetheine 4'-phosphoryl)serine mark. Positions 3850 to 4204 (QDVLPCTSMQ…GLDEIVEHYA (355 aa)) are condensation 4.

This sequence belongs to the NRP synthetase family.

Its pathway is mycotoxin biosynthesis. Nonribosomal peptide synthetase; part of the gene clusters that mediate the biosynthesis of AM-toxins, host-selective toxins (HSTs) causing Alternaria blotch on apple, a worldwide distributed disease. AM-toxins are cyclic depsipeptides containing the 3 residues 2-hydroxy-isovaleric acid (2-HIV), dehydroalanine, L-alanine which are common for all 3 AM-toxins I to III. The fourth precursor is L-alpha-amino-methoxyphenyl-valeric acid (L-Amv) for AM-toxin I, L-alpha-amino-phenyl-valeric acid (L-Apv) for AM-toxin II, and L-alpha-amino-hydroxyphenyl-valeric acid (L-Ahv) for AM-toxin III. AM-toxins have two target sites for affecting susceptible apple cells; they cause invagination of the plasma membrane and electrolyte loss, and chloroplast disorganization. The non-ribosomal peptide synthetase AMT1 contains 4 catalytic modules and is responsible for activation of each residue in AM-toxin. The aldo-keto reductase AMT2 catalyzes the conversion of 2-keto-isovaleric acid (2-KIV) to 2-hydroxy-isovaleric acid (2-HIV), one of the precursor residues incorporated by AMT1 during AM-toxin biosynthesis, by reduction of its ketone to an alcohol. The cytochrome P450 monooxygenase AMT3 and the thioesterase AMT4 are also important for AM-toxin production, but their exact function within the AM-toxin biosynthesis are not known yet. Up to 21 proteins (including AMT1 to AMT4) are predicted to be involved in AM-toxin biosynthesis since their expression ishighly up-regulated in AM-toxin-producing cultures. The polypeptide is AM-toxin synthetase AMT1 (Alternaria alternata (Alternaria rot fungus)).